Consider the following 138-residue polypeptide: Regulator of ribonuclease activity B (138 aa).

The disordered stretch occupies residues 114–138; the sequence is YFEDPNGEDGDDEDFVDEDDDGVRH. Over residues 118–138 the composition is skewed to acidic residues; it reads PNGEDGDDEDFVDEDDDGVRH.

This sequence belongs to the RraB family. As to quaternary structure, interacts with the C-terminal region of Rne.

It is found in the cytoplasm. In terms of biological role, globally modulates RNA abundance by binding to RNase E (Rne) and regulating its endonucleolytic activity. Can modulate Rne action in a substrate-dependent manner by altering the composition of the degradosome. The polypeptide is Regulator of ribonuclease activity B (Escherichia coli (strain K12)).